We begin with the raw amino-acid sequence, 214 residues long: Putative glucose-6-phosphate isomerase 1 (214 aa).

Fe cation-binding residues include H92, H94, E101, and H140.

It belongs to the archaeal-type GPI family. Homodimer. The cofactor is Fe cation.

It localises to the cytoplasm. It catalyses the reaction alpha-D-glucose 6-phosphate = beta-D-fructose 6-phosphate. It functions in the pathway carbohydrate degradation; glycolysis; D-glyceraldehyde 3-phosphate and glycerone phosphate from D-glucose: step 2/4. In Rhizobium meliloti (strain 1021) (Ensifer meliloti), this protein is Putative glucose-6-phosphate isomerase 1 (pgiA1).